Consider the following 47-residue polypeptide: Photosystem II reaction center protein K (47 aa).

Positions 1 to 10 (MAPLTLDLLA) are excised as a propeptide. A helical membrane pass occupies residues 26 to 46 (LPLIPLLFFLLVFVWQAAVGF).

Belongs to the PsbK family. In terms of assembly, PSII is composed of 1 copy each of membrane proteins PsbA, PsbB, PsbC, PsbD, PsbE, PsbF, PsbH, PsbI, PsbJ, PsbK, PsbL, PsbM, PsbT, PsbX, PsbY, Psb30/Ycf12, peripheral proteins PsbO, CyanoQ (PsbQ), PsbU, PsbV and a large number of cofactors. It forms dimeric complexes.

It is found in the cellular thylakoid membrane. Functionally, one of the components of the core complex of photosystem II (PSII). PSII is a light-driven water:plastoquinone oxidoreductase that uses light energy to abstract electrons from H(2)O, generating O(2) and a proton gradient subsequently used for ATP formation. It consists of a core antenna complex that captures photons, and an electron transfer chain that converts photonic excitation into a charge separation. This is Photosystem II reaction center protein K from Prochlorococcus marinus (strain SARG / CCMP1375 / SS120).